Here is a 110-residue protein sequence, read N- to C-terminus: UPF0060 membrane protein Bcen_0802 (110 aa).

A run of 4 helical transmembrane segments spans residues 9 to 29 (ALFA…WLVL), 34 to 54 (PAWL…LLTL), 66 to 86 (YGGV…GVAL), and 88 to 108 (RWDV…ALQP).

The protein belongs to the UPF0060 family.

The protein resides in the cell inner membrane. The sequence is that of UPF0060 membrane protein Bcen_0802 from Burkholderia orbicola (strain AU 1054).